Consider the following 276-residue polypeptide: Orotidine 5'-phosphate decarboxylase (276 aa).

Catalysis depends on K95, which acts as the Proton donor.

This sequence belongs to the OMP decarboxylase family. Type 2 subfamily.

It carries out the reaction orotidine 5'-phosphate + H(+) = UMP + CO2. The protein operates within pyrimidine metabolism; UMP biosynthesis via de novo pathway; UMP from orotate: step 2/2. The polypeptide is Orotidine 5'-phosphate decarboxylase (pyrF) (Mycolicibacterium smegmatis (strain ATCC 700084 / mc(2)155) (Mycobacterium smegmatis)).